We begin with the raw amino-acid sequence, 473 residues long: Xylan O-acetyltransferase 14 (473 aa).

A compositionally biased stretch (polar residues) spans 1–17; that stretch reads MTTTGSTPPRKNRSNVT. A disordered region spans residues 1 to 22; the sequence is MTTTGSTPPRKNRSNVTGGEGG. Residues 1–54 are Cytoplasmic-facing; it reads MTTTGSTPPRKNRSNVTGGEGGSLEEYAWRAAGEAAAAKKATRAWGVSVSLRSH. The chain crosses the membrane as a helical; Signal-anchor for type II membrane protein span at residues 55–75; that stretch reads FSSLVLLLLLLLVALAVSATT. The interval 76-101 is disordered; that stretch reads KNGDPAETPHAPPLPPPASIKLPSSS. Topologically, residues 76–473 are lumenal; it reads KNGDPAETPH…NQLLYAHIVS (398 aa). Intrachain disulfides connect cysteine 108/cysteine 159, cysteine 130/cysteine 195, cysteine 139/cysteine 455, and cysteine 370/cysteine 451. The GDS motif motif lies at 182–184; it reads GDS. Residue serine 184 is the Nucleophile of the active site. Asparagine 209, asparagine 223, and asparagine 414 each carry an N-linked (GlcNAc...) asparagine glycan. The active-site Proton donor is aspartate 450. The DXXH motif signature appears at 450–453; it reads DCIH. Residue histidine 453 is the Proton acceptor of the active site.

Belongs to the PC-esterase family. TBL subfamily.

Its subcellular location is the golgi apparatus membrane. Xylan acetyltransferase required for 2-O- and 3-O-monoacetylation of xylosyl residues in xylan. Catalyzes the 2-O-acetylation of xylan, followed by nonenzymatic acetyl migration to the O-3 position, resulting in products that are monoacetylated at both O-2 and O-3 positions. This is Xylan O-acetyltransferase 14 from Oryza sativa subsp. japonica (Rice).